A 196-amino-acid polypeptide reads, in one-letter code: Peptidyl-tRNA hydrolase (196 aa).

Tyr-17 contributes to the tRNA binding site. Catalysis depends on His-22, which acts as the Proton acceptor. Tyr-69, Asn-71, and Asn-117 together coordinate tRNA.

Belongs to the PTH family. Monomer.

It localises to the cytoplasm. The catalysed reaction is an N-acyl-L-alpha-aminoacyl-tRNA + H2O = an N-acyl-L-amino acid + a tRNA + H(+). Hydrolyzes ribosome-free peptidyl-tRNAs (with 1 or more amino acids incorporated), which drop off the ribosome during protein synthesis, or as a result of ribosome stalling. Its function is as follows. Catalyzes the release of premature peptidyl moieties from peptidyl-tRNA molecules trapped in stalled 50S ribosomal subunits, and thus maintains levels of free tRNAs and 50S ribosomes. The polypeptide is Peptidyl-tRNA hydrolase (Pseudarthrobacter chlorophenolicus (strain ATCC 700700 / DSM 12829 / CIP 107037 / JCM 12360 / KCTC 9906 / NCIMB 13794 / A6) (Arthrobacter chlorophenolicus)).